The sequence spans 216 residues: Peptide methionine sulfoxide reductase MsrA (216 aa).

Cys54 is a catalytic residue.

Belongs to the MsrA Met sulfoxide reductase family.

The catalysed reaction is L-methionyl-[protein] + [thioredoxin]-disulfide + H2O = L-methionyl-(S)-S-oxide-[protein] + [thioredoxin]-dithiol. The enzyme catalyses [thioredoxin]-disulfide + L-methionine + H2O = L-methionine (S)-S-oxide + [thioredoxin]-dithiol. Functionally, has an important function as a repair enzyme for proteins that have been inactivated by oxidation. Catalyzes the reversible oxidation-reduction of methionine sulfoxide in proteins to methionine. In Xylella fastidiosa (strain M12), this protein is Peptide methionine sulfoxide reductase MsrA.